The chain runs to 347 residues: uncharacterized protein (347 aa).

The first 21 residues, 1–21 (MRYRIFLLFFFALLPTSLVWA), serve as a signal peptide directing secretion.

This is an uncharacterized protein from Escherichia coli (strain K12).